Reading from the N-terminus, the 206-residue chain is Thymidylate kinase (206 aa).

Residue 10-17 (GVDGVGKT) participates in ATP binding.

This sequence belongs to the thymidylate kinase family.

The enzyme catalyses dTMP + ATP = dTDP + ADP. Phosphorylation of dTMP to form dTDP in both de novo and salvage pathways of dTTP synthesis. This is Thymidylate kinase from Bifidobacterium longum (strain NCC 2705).